The primary structure comprises 344 residues: Coproporphyrin III ferrochelatase (344 aa).

Serine 52 lines the Fe-coproporphyrin III pocket. Cysteine 113 contributes to the [2Fe-2S] cluster binding site. Tyrosine 116 lines the Fe-coproporphyrin III pocket. Residues histidine 172 and glutamate 255 each coordinate Fe(2+). [2Fe-2S] cluster is bound by residues cysteine 316, cysteine 325, and cysteine 330.

It belongs to the ferrochelatase family. The cofactor is [2Fe-2S] cluster.

It is found in the cytoplasm. The catalysed reaction is Fe-coproporphyrin III + 2 H(+) = coproporphyrin III + Fe(2+). It participates in porphyrin-containing compound metabolism; protoheme biosynthesis. Involved in coproporphyrin-dependent heme b biosynthesis. Catalyzes the insertion of ferrous iron into coproporphyrin III to form Fe-coproporphyrin III. The protein is Coproporphyrin III ferrochelatase of Mycobacterium bovis (strain ATCC BAA-935 / AF2122/97).